The chain runs to 232 residues: MKELQTVLKNHFAIEFTDKNLLETAFTHTSYANEHRLLKISHNERLEFLGDAVLQLLISEYLYKKYPKKPEGDLSKLRAMIVREESLAGFARDCQFDQFIKLGKGEEKSGGRNRDTILGDAFEAFLGALLLDKDVAKVKEFIYQVMIPKVEAGEFEMITDYKTHLQELLQVNGDVAIRYQVISETGPAHDKVFDVEVLVEGKSIGQGQGRSKKLAEQEAAKNAVEKGLDSCI.

Residues 5–134 (QTVLKNHFAI…FLGALLLDKD (130 aa)) form the RNase III domain. Glutamate 47 is a Mg(2+) binding site. Aspartate 51 is an active-site residue. Residues aspartate 120 and glutamate 123 each coordinate Mg(2+). Residue glutamate 123 is part of the active site. Residues 160–229 (DYKTHLQELL…AKNAVEKGLD (70 aa)) enclose the DRBM domain.

It belongs to the ribonuclease III family. As to quaternary structure, homodimer. Mg(2+) is required as a cofactor.

It is found in the cytoplasm. The catalysed reaction is Endonucleolytic cleavage to 5'-phosphomonoester.. Digests double-stranded RNA. Involved in the processing of primary rRNA transcript to yield the immediate precursors to the large and small rRNAs (23S and 16S). Processes some mRNAs, and tRNAs when they are encoded in the rRNA operon. Processes pre-crRNA and tracrRNA of type II CRISPR loci if present in the organism. This Streptococcus pneumoniae (strain Taiwan19F-14) protein is Ribonuclease 3.